The sequence spans 357 residues: Arginine kinase (357 aa).

Ala2 carries the post-translational modification N-acetylalanine. Residues 9-91 (KLEEGFKKLQ…FDPIIEDYHK (83 aa)) enclose the Phosphagen kinase N-terminal domain. 64 to 68 (GVGVY) contributes to the L-arginine binding site. The Phosphagen kinase C-terminal domain occupies 119–356 (FVISTRVRCG…LELIKIEKEM (238 aa)). Residues 122–126 (STRVR) and His185 each bind ATP. Glu225 is an L-arginine binding site. Arg229 serves as a coordination point for ATP. Position 271 (Cys271) interacts with L-arginine. Residues 280–284 (RASVH) and 309–314 (RGTRGE) contribute to the ATP site. Glu314 is a binding site for L-arginine.

The protein belongs to the ATP:guanido phosphotransferase family.

The enzyme catalyses L-arginine + ATP = N(omega)-phospho-L-arginine + ADP + H(+). The protein is Arginine kinase of Pachygrapsus marmoratus (Marbled rock crab).